We begin with the raw amino-acid sequence, 268 residues long: Glutamate racemase (268 aa).

Residues 9–10 and 41–42 contribute to the substrate site; these read DS and YG. C73 functions as the Proton donor/acceptor in the catalytic mechanism. 74–75 contributes to the substrate binding site; the sequence is NS. Residue C183 is the Proton donor/acceptor of the active site. Residue 184 to 185 participates in substrate binding; that stretch reads TH.

Belongs to the aspartate/glutamate racemases family.

It carries out the reaction L-glutamate = D-glutamate. It participates in cell wall biogenesis; peptidoglycan biosynthesis. Its function is as follows. Provides the (R)-glutamate required for cell wall biosynthesis. The polypeptide is Glutamate racemase (Shewanella piezotolerans (strain WP3 / JCM 13877)).